A 121-amino-acid polypeptide reads, in one-letter code: Glycine cleavage system H protein (121 aa).

A Lipoyl-binding domain is found at 22-102 (IAWVGITKYA…DSSVWLFKAE (81 aa)). Lys-63 carries the post-translational modification N6-lipoyllysine.

This sequence belongs to the GcvH family. In terms of assembly, the glycine cleavage system is composed of four proteins: P, T, L and H. It depends on (R)-lipoate as a cofactor.

Its function is as follows. The glycine cleavage system catalyzes the degradation of glycine. The H protein shuttles the methylamine group of glycine from the P protein to the T protein. The protein is Glycine cleavage system H protein of Tropheryma whipplei (strain TW08/27) (Whipple's bacillus).